Consider the following 103-residue polypeptide: Large ribosomal subunit protein bL21 (103 aa).

This sequence belongs to the bacterial ribosomal protein bL21 family. Part of the 50S ribosomal subunit. Contacts protein L20.

This protein binds to 23S rRNA in the presence of protein L20. In Polaromonas sp. (strain JS666 / ATCC BAA-500), this protein is Large ribosomal subunit protein bL21.